A 116-amino-acid chain; its full sequence is Co-chaperonin GroES (116 aa).

The protein belongs to the GroES chaperonin family. Heptamer of 7 subunits arranged in a ring. Interacts with the chaperonin GroEL.

It localises to the cytoplasm. Functionally, together with the chaperonin GroEL, plays an essential role in assisting protein folding. The GroEL-GroES system forms a nano-cage that allows encapsulation of the non-native substrate proteins and provides a physical environment optimized to promote and accelerate protein folding. GroES binds to the apical surface of the GroEL ring, thereby capping the opening of the GroEL channel. In Mycoplasma pneumoniae (strain ATCC 29342 / M129 / Subtype 1) (Mycoplasmoides pneumoniae), this protein is Co-chaperonin GroES.